We begin with the raw amino-acid sequence, 445 residues long: Phosphoglucosamine mutase (445 aa).

Residue Ser102 is the Phosphoserine intermediate of the active site. Residues Ser102, Asp241, Asp243, and Asp245 each coordinate Mg(2+). The residue at position 102 (Ser102) is a Phosphoserine.

The protein belongs to the phosphohexose mutase family. Mg(2+) serves as cofactor. In terms of processing, activated by phosphorylation.

It catalyses the reaction alpha-D-glucosamine 1-phosphate = D-glucosamine 6-phosphate. Its function is as follows. Catalyzes the conversion of glucosamine-6-phosphate to glucosamine-1-phosphate. This is Phosphoglucosamine mutase from Escherichia coli O81 (strain ED1a).